The sequence spans 363 residues: MSFSLFRKAPKFWERRGPTSLLLWPLSWLYGLILRARKLIHDLGIVRTKPTPVPIIIVGNIRVGGTGKTPIVIALAKRLSQLGWKPGIISRGYGSSSQTAPLLVRSDSSPSLVGDEPVLIAKRTDNQFPIWVYPKRQQSIQALLKHSPEVDVIISDDGLQHRGLTRWPAREGGRDIEFVVRDSRGEGNRFLLPAGPLREPATRDRDATLFTGNPSFNEKKTGILDEYFLGRRAFSLGTYLGRPYQLIDHANTQSLEQIAEQFLPKSMTAIAGLGNPQRFFDDLAKQGVTCKQIPLPDHAQYTPEFFAKVKAQCLLITEKDAVKCAEISDERIWVVPMSLHLPENFVEWLQSILQRPDPHRYTL.

Residue 62-69 coordinates ATP; the sequence is RVGGTGKT.

It belongs to the LpxK family.

It catalyses the reaction a lipid A disaccharide + ATP = a lipid IVA + ADP + H(+). It participates in glycolipid biosynthesis; lipid IV(A) biosynthesis; lipid IV(A) from (3R)-3-hydroxytetradecanoyl-[acyl-carrier-protein] and UDP-N-acetyl-alpha-D-glucosamine: step 6/6. Transfers the gamma-phosphate of ATP to the 4'-position of a tetraacyldisaccharide 1-phosphate intermediate (termed DS-1-P) to form tetraacyldisaccharide 1,4'-bis-phosphate (lipid IVA). The polypeptide is Tetraacyldisaccharide 4'-kinase (Polynucleobacter asymbioticus (strain DSM 18221 / CIP 109841 / QLW-P1DMWA-1) (Polynucleobacter necessarius subsp. asymbioticus)).